Reading from the N-terminus, the 361-residue chain is tRNA(Ile)-lysidine synthase (361 aa).

32-37 (SGGPDS) lines the ATP pocket.

It belongs to the tRNA(Ile)-lysidine synthase family.

It localises to the cytoplasm. The catalysed reaction is cytidine(34) in tRNA(Ile2) + L-lysine + ATP = lysidine(34) in tRNA(Ile2) + AMP + diphosphate + H(+). Functionally, ligates lysine onto the cytidine present at position 34 of the AUA codon-specific tRNA(Ile) that contains the anticodon CAU, in an ATP-dependent manner. Cytidine is converted to lysidine, thus changing the amino acid specificity of the tRNA from methionine to isoleucine. This is tRNA(Ile)-lysidine synthase from Bradyrhizobium diazoefficiens (strain JCM 10833 / BCRC 13528 / IAM 13628 / NBRC 14792 / USDA 110).